The sequence spans 365 residues: tRNA/tmRNA (uracil-C(5))-methyltransferase (365 aa).

5 residues coordinate S-adenosyl-L-methionine: Gln-189, Tyr-217, Asn-222, Glu-238, and Asp-298. The active-site Nucleophile is Cys-323. Glu-357 serves as the catalytic Proton acceptor.

Belongs to the class I-like SAM-binding methyltransferase superfamily. RNA M5U methyltransferase family. TrmA subfamily.

The enzyme catalyses uridine(54) in tRNA + S-adenosyl-L-methionine = 5-methyluridine(54) in tRNA + S-adenosyl-L-homocysteine + H(+). It catalyses the reaction uridine(341) in tmRNA + S-adenosyl-L-methionine = 5-methyluridine(341) in tmRNA + S-adenosyl-L-homocysteine + H(+). Its function is as follows. Dual-specificity methyltransferase that catalyzes the formation of 5-methyluridine at position 54 (m5U54) in all tRNAs, and that of position 341 (m5U341) in tmRNA (transfer-mRNA). The protein is tRNA/tmRNA (uracil-C(5))-methyltransferase of Shewanella amazonensis (strain ATCC BAA-1098 / SB2B).